We begin with the raw amino-acid sequence, 432 residues long: MVTSAFQTAQSHRLFAEAQQLMPGGVNSPVRAFKSVGSEPVFIERAEGAYLWDVDGNRYIEYINTWGPSIVGHSHPEVISALREALPKGTSYGAPTRLENQMARTVIDAIPAVEMVRFVNSGTEATMSALRLARAFTGREKIIKFEGCYHGHADMLLVQAGSGVATLGLPDSPGVPKSTTAATLTAPYNDLAAVEALFKQYPSDVAGLILEPVVGNAGCLVPEIGFLEGLRDLTHAHGTVLIFDEVMTGFRLSYGGAQARYGIEPDLTCLGKIIGGGLPVGAYAGRREIMQMVAPAGPMYQAGTLSGNPLAMTAGIKTLEILQRPGTYERLEGLSARLADGLLAAAREAGHAATGNRVGAMFTLFFTEGPVRNFADAKRSDLQKFARFHRGMLERGVYLAPSQFEAGFMSLAHTEEDIDYTVAAARTVLAAL.

N6-(pyridoxal phosphate)lysine is present on K272.

This sequence belongs to the class-III pyridoxal-phosphate-dependent aminotransferase family. HemL subfamily. In terms of assembly, homodimer. It depends on pyridoxal 5'-phosphate as a cofactor.

The protein resides in the cytoplasm. The enzyme catalyses (S)-4-amino-5-oxopentanoate = 5-aminolevulinate. It functions in the pathway porphyrin-containing compound metabolism; protoporphyrin-IX biosynthesis; 5-aminolevulinate from L-glutamyl-tRNA(Glu): step 2/2. The protein operates within porphyrin-containing compound metabolism; chlorophyll biosynthesis. In Gloeobacter violaceus (strain ATCC 29082 / PCC 7421), this protein is Glutamate-1-semialdehyde 2,1-aminomutase.